The chain runs to 204 residues: Casparian strip membrane protein 2 (204 aa).

The Cytoplasmic segment spans residues 1–41 (MKNESTFIDVPADSSSAMKGKAPLIGVAKDHTASGSGGYNR). The chain crosses the membrane as a helical span at residues 42–62 (GLSIFDFLLRLAAIVAASVAA). At 63 to 92 (GTMFTSDETLPFFTQFLQFEAGYDDLPTFQ) the chain is on the extracellular side. Residues 93-113 (FFVIAMSLVSGYIVLSLPISV) form a helical membrane-spanning segment. Over 114–125 (VTIVRPLAAAPR) the chain is Cytoplasmic. A helical membrane pass occupies residues 126-146 (LLLLVLDTAVMGLTMAAASSA). At 147–178 (AAISYVAHNGNQNTNWLPICQQFFDFCQKTSG) the chain is on the extracellular side. A helical transmembrane segment spans residues 179–199 (AVVSSFVAVVFFMILVVLSGV). Topologically, residues 200–204 (ALERH) are cytoplasmic.

Belongs to the Casparian strip membrane proteins (CASP) family. In terms of assembly, homodimer and heterodimers.

The protein localises to the cell membrane. In terms of biological role, regulates membrane-cell wall junctions and localized cell wall deposition. Required for establishment of the Casparian strip membrane domain (CSD) and the subsequent formation of Casparian strips, a cell wall modification of the root endodermis that determines an apoplastic barrier between the intraorganismal apoplasm and the extraorganismal apoplasm and prevents lateral diffusion. This Raphanus sativus (Radish) protein is Casparian strip membrane protein 2.